Consider the following 603-residue polypeptide: Baeyer-Villiger monooxygenase (603 aa).

FAD is bound by residues Glu-94, 102 to 105 (TWYW), Asp-114, Tyr-120, and Val-164. Residue 112–114 (HCD) participates in NADP(+) binding. NADP(+) is bound by residues 248–254 (TGATGVQ), 271–272 (RT), and 386–387 (KR).

It belongs to the FAD-binding monooxygenase family. FAD serves as cofactor.

Functionally, catalyzes a Baeyer-Villiger oxidation reaction, i.e. the insertion of an oxygen atom into a carbon-carbon bond adjacent to a carbonyl, which converts ketones to esters or lactones using NADPH and/or NADH as an electron donor. Thus, can convert bicyclo[3.2.0]hept-2-en-6-one into the oxidative lactone products 2-oxabicyclo[3.3.0]oct-6-en-3-one and 3-oxabicyclo[3.3.0]oct-6-en-2-one. Is also able to catalyze the sulfoxidation of methyl phenyl sulfide (thioanisole). This chain is Baeyer-Villiger monooxygenase, found in Streptomyces coelicolor (strain ATCC BAA-471 / A3(2) / M145).